We begin with the raw amino-acid sequence, 118 residues long: NADPH-dependent 7-cyano-7-deazaguanine reductase (118 aa).

The active-site Thioimide intermediate is the Cys31. The active-site Proton donor is Asp38. Substrate-binding positions include Ile53–Leu55 and Tyr72–Glu73.

It belongs to the GTP cyclohydrolase I family. QueF type 1 subfamily.

It localises to the cytoplasm. The enzyme catalyses 7-aminomethyl-7-carbaguanine + 2 NADP(+) = 7-cyano-7-deazaguanine + 2 NADPH + 3 H(+). It participates in tRNA modification; tRNA-queuosine biosynthesis. Its function is as follows. Catalyzes the NADPH-dependent reduction of 7-cyano-7-deazaguanine (preQ0) to 7-aminomethyl-7-deazaguanine (preQ1). This is NADPH-dependent 7-cyano-7-deazaguanine reductase from Prosthecochloris aestuarii (strain DSM 271 / SK 413).